The chain runs to 430 residues: DNA-binding protein cre-1 (430 aa).

The span at 1-19 (MQRVQSAVDFSNLLNPSES) shows a compositional bias: polar residues. 4 disordered regions span residues 1-77 (MQRV…LPRP), 97-187 (IRTH…PHSY), 265-340 (SRSH…RNLS), and 357-430 (LDGQ…MDRL). Positions 30 to 46 (PRQQTAQPQQQQQQPQP) are enriched in low complexity. 2 consecutive C2H2-type zinc fingers follow at residues 78–100 (YKCP…IRTH) and 106–130 (HACQ…SRIH). Residues 97 to 106 (IRTHTGEKPH) show a composition bias toward basic and acidic residues. 2 stretches are compositionally biased toward polar residues: residues 130–147 (HSNP…QQQH) and 175–187 (AMSS…PHSY). Positions 268 to 277 (HSHEDHDDHY) are enriched in basic and acidic residues. The segment covering 289–303 (PNSPNSTAPSSPTFS) has biased composition (low complexity). The span at 412–422 (SVRNSSSTSLS) shows a compositional bias: polar residues.

It belongs to the creA/MIG C2H2-type zinc-finger protein family.

The protein resides in the nucleus. Functionally, involved in carbon catabolite repression. Represses the transcription of a number of genes by binding to a GC-rich region in their promoter. This is DNA-binding protein cre-1 (cre-1) from Neurospora crassa (strain ATCC 24698 / 74-OR23-1A / CBS 708.71 / DSM 1257 / FGSC 987).